The following is a 313-amino-acid chain: MNTFSQVWVFSDTPSRLPELMNGAQALANQINTFVLNDADGAQAIQLGANHVWKLSGKPDERMIEDYAGVMADTIRQHGADGLVLLPNTRRGKLLAAKLGYRLKAAVSNDASTVSVQDGKATVKHMVYGGLAIGEERIATPYAVLTISSGTFDAAQPDASRTGETHTVEWLAPAVAITRTATQARQSNSVDLDKARLVVSVGRGIGSKENIALAEQLCKAIGAELACSRPVAENEKWMEHERYVGISNLMLKPELYLAVGISGQIQHMVGANASQTIFAINKDKNAPIFQYADYGIVGDAVKILPALTAALAR.

An FAD-binding site is contributed by 255-283; that stretch reads LYLAVGISGQIQHMVGANASQTIFAINKD.

The protein belongs to the ETF alpha-subunit/FixB family. In terms of assembly, heterodimer of FixA and FixB.

It participates in amine and polyamine metabolism; carnitine metabolism. Functionally, required for anaerobic carnitine reduction. May bring reductant to CaiA. The protein is Protein FixB of Escherichia coli O7:K1 (strain IAI39 / ExPEC).